Consider the following 114-residue polypeptide: DNA-directed RNA polymerases II, IV and V subunit 9A (114 aa).

Zn(2+) is bound by residues Cys7, Cys10, Cys29, Cys32, Cys76, Cys79, Cys103, and Cys108. The segment at 72 to 113 adopts a TFIIS-type zinc-finger fold; that stretch reads KAVRCSKCQHREAVFFQATARGEEGMTLFFVCCNPNCGHRWR.

This sequence belongs to the archaeal RpoM/eukaryotic RPA12/RPB9/RPC11 RNA polymerase family. Component of the RNA polymerase II, IV and V complexes. Interacts with NRPD1.

It localises to the nucleus. It is found in the nucleolus. In terms of biological role, DNA-dependent RNA polymerase catalyzes the transcription of DNA into RNA using the four ribonucleoside triphosphates as substrates. Component of RNA polymerase II which synthesizes mRNA precursors and many functional non-coding RNAs. Pol II is the central component of the basal RNA polymerase II transcription machinery. It is composed of mobile elements that move relative to each other. Component of RNA polymerases IV and V which mediate short-interfering RNAs (siRNA) accumulation and subsequent RNA-directed DNA methylation-dependent (RdDM) transcriptional gene silencing (TGS) of endogenous repeated sequences, including transposable elements. Required for RNA silencing. In Arabidopsis thaliana (Mouse-ear cress), this protein is DNA-directed RNA polymerases II, IV and V subunit 9A (NRPB9A).